We begin with the raw amino-acid sequence, 380 residues long: Queuine tRNA-ribosyltransferase (380 aa).

The Proton acceptor role is filled by Asp-95. Substrate-binding positions include 95-99, Asp-149, Gln-192, and Gly-219; that span reads DSGGF. The tract at residues 250-256 is RNA binding; it reads GVGSPDA. Asp-269 (nucleophile) is an active-site residue. Positions 274–278 are RNA binding; important for wobble base 34 recognition; it reads TRIAR. Zn(2+)-binding residues include Cys-307, Cys-309, Cys-312, and His-338.

It belongs to the queuine tRNA-ribosyltransferase family. In terms of assembly, homodimer. Within each dimer, one monomer is responsible for RNA recognition and catalysis, while the other monomer binds to the replacement base PreQ1. It depends on Zn(2+) as a cofactor.

It carries out the reaction 7-aminomethyl-7-carbaguanine + guanosine(34) in tRNA = 7-aminomethyl-7-carbaguanosine(34) in tRNA + guanine. Its pathway is tRNA modification; tRNA-queuosine biosynthesis. In terms of biological role, catalyzes the base-exchange of a guanine (G) residue with the queuine precursor 7-aminomethyl-7-deazaguanine (PreQ1) at position 34 (anticodon wobble position) in tRNAs with GU(N) anticodons (tRNA-Asp, -Asn, -His and -Tyr). Catalysis occurs through a double-displacement mechanism. The nucleophile active site attacks the C1' of nucleotide 34 to detach the guanine base from the RNA, forming a covalent enzyme-RNA intermediate. The proton acceptor active site deprotonates the incoming PreQ1, allowing a nucleophilic attack on the C1' of the ribose to form the product. After dissociation, two additional enzymatic reactions on the tRNA convert PreQ1 to queuine (Q), resulting in the hypermodified nucleoside queuosine (7-(((4,5-cis-dihydroxy-2-cyclopenten-1-yl)amino)methyl)-7-deazaguanosine). This chain is Queuine tRNA-ribosyltransferase, found in Pediococcus pentosaceus (strain ATCC 25745 / CCUG 21536 / LMG 10740 / 183-1w).